The following is a 452-amino-acid chain: Gamma-aminobutyric acid receptor subunit delta (452 aa).

Positions Met1 to Ala24 are cleaved as a signal peptide. The Extracellular portion of the chain corresponds to Met25 to Ile251. Residues Asn103 and Asn106 are each glycosylated (N-linked (GlcNAc...) asparagine). A disulfide bond links Cys164 and Cys178. Residues Ile252–Ile271 form a helical membrane-spanning segment. Residues Ser272–Ala275 lie on the Cytoplasmic side of the membrane. A helical membrane pass occupies residues Val276–Arg298. The Extracellular segment spans residues Ser299–Lys308. A helical transmembrane segment spans residues Ala309 to Ala331. The Cytoplasmic segment spans residues His332 to Thr426. The residue at position 390 (Ser390) is a Phosphoserine. A helical transmembrane segment spans residues Ile427 to Ala449. Residues Tyr450–Met452 are Extracellular-facing.

The protein belongs to the ligand-gated ion channel (TC 1.A.9) family. Gamma-aminobutyric acid receptor (TC 1.A.9.5) subfamily. GABRD sub-subfamily. Heteropentamer, formed by a combination of alpha (GABRA1-6), beta (GABRB1-3), gamma (GABRG1-3), delta (GABRD), epsilon (GABRE), rho (GABRR1-3), pi (GABRP) and theta (GABRQ) chains, each subunit exhibiting distinct physiological and pharmacological properties.

The protein resides in the cell membrane. The enzyme catalyses chloride(in) = chloride(out). Functionally, delta subunit of the heteropentameric ligand-gated chloride channel gated by gamma-aminobutyric acid (GABA), a major inhibitory neurotransmitter in the brain. GABA-gated chloride channels, also named GABA(A) receptors (GABAAR), consist of five subunits arranged around a central pore and contain GABA active binding site(s) located at the alpha and beta subunit interface(s). When activated by GABA, GABAARs selectively allow the flow of chloride anions across the cell membrane down their electrochemical gradient. GABAARs containing delta/GABRD subunits are predominantly located in extrasynaptic or perisynaptic positions on hippocampus and cerebellar granule cells, and contribute to the tonic GABAergic inhibition. GABAAR containing alpha-4-beta-3-delta subunits can simultaneously bind GABA and histamine where histamine binds at the interface of two neighboring beta subunits, which may be involved in the regulation of sleep and wakefulness. The chain is Gamma-aminobutyric acid receptor subunit delta from Homo sapiens (Human).